Consider the following 419-residue polypeptide: rRNA methyltransferase 3, mitochondrial (419 aa).

The N-terminal 39 residues, 1 to 39 (MAALCGGMLRGCILKPLGLSGSLQLKRNVRALRRTPVRV), are a transit peptide targeting the mitochondrion. Residues 42-68 (ADEEGRERKQVEASRQRQPRQNESQAC) are disordered. The segment covering 44 to 56 (EEGRERKQVEASR) has biased composition (basic and acidic residues). The S-adenosyl-L-methionine site is built by Gly-357, Ile-381, and Leu-390.

This sequence belongs to the class IV-like SAM-binding methyltransferase superfamily. RNA methyltransferase TrmH family.

It is found in the mitochondrion. It carries out the reaction a uridine in rRNA + S-adenosyl-L-methionine = a 2'-O-methyluridine in rRNA + S-adenosyl-L-homocysteine + H(+). In terms of biological role, S-adenosyl-L-methionine-dependent 2'-O-ribose methyltransferase that catalyzes the formation of 2'-O-methylguanosine at position 1370 (Gm1370) in the mitochondrial large subunit ribosomal RNA (mtLSU rRNA), a conserved modification in the peptidyl transferase domain of the mtLSU rRNA. Also required for formation of 2'-O-methyluridine at position 1369 (Um1369) mediated by MRM2. The sequence is that of rRNA methyltransferase 3, mitochondrial from Xenopus laevis (African clawed frog).